The sequence spans 43 residues: ORF7b protein (43 aa).

The helical transmembrane segment at 9–29 (FYLCFLAFLLFLVLIMLIIFW) threads the bilayer.

The protein localises to the host Golgi apparatus membrane. It localises to the host endosome membrane. The polypeptide is ORF7b protein (Homo sapiens (Human)).